We begin with the raw amino-acid sequence, 77 residues long: Apelin (77 aa).

The signal sequence occupies residues 1–22 (MNLSFCVQALLLLWLSLTAVCG). Residues 23–41 (VPLMLPPDGKGLEEGNMRY) constitute a propeptide that is removed on maturation. A disordered region spans residues 45-77 (PRTSRTGPGAWQGGRRKFRRQRPRLSHKGPMPF). The segment covering 58 to 71 (GRRKFRRQRPRLSH) has biased composition (basic residues).

This sequence belongs to the apelin family. Post-translationally, several active peptides may be produced by proteolytic processing of the peptide precursor. In terms of tissue distribution, expressed in the lung, testis, ovary, uterus and mammary gland. Expressed in neurons in the thalamic paraventricular and hypothalamic supraoptic nuclei. The lung, testis and uterus mainly contain a large form that looks like apelin-36, whereas the mammary gland seems to contain 2 forms of apelin, a large form close to apelin-36 and a small form close to apelin-13 (at protein level). Widely expressed in the adult, with highest levels in the mammary gland of lactating animals, very high levels in the lung, intermediate levels in the spinal cord, ovary, adipose tissue, brain (neuronal cell bodies and fibers in the supraoptic and the paraventricular nuclei), heart and testis, and lowest levels in the pituitary gland, kidney, stomach, uterus and pancreas.

It localises to the secreted. It is found in the extracellular space. Its function is as follows. Peptide hormone that functions as endogenous ligand for the G-protein-coupled apelin receptor (APLNR/APJ), that plays a role in cadiovascular homeostasis. Functions as a balanced agonist activating both G(i) protein pathway and beta-arrestin pathway of APLNR. Downstream G proteins activation, apelin can inhibit cAMP production and activate key intracellular effectors such as ERKs. On the other hand, APLNR activation induces beta-arrestin recruitment to the membrane leading to desensitization and internalization of the receptor. Apelin blunts cardiac hypertrophic induction from APLNR on response to pathological stimuli, but also induces myocardial hypertrophy under normal conditions. Apelin-36 dissociates more hardly than (pyroglu)apelin-13 from APLNR. Involved in the regulation of cardiac precursor cell movements during gastrulation and heart morphogenesis. Has an inhibitory effect on cytokine production in response to T-cell receptor/CD3 cross-linking; the oral intake of apelin in the colostrum and the milk might therefore modulate immune responses in neonates. Plays a role in early coronary blood vessels formation. Mediates myocardial contractility in an ERK1/2-dependent manner. May also have a role in the central control of body fluid homeostasis by influencing vasopressin release and drinking behavior. The sequence is that of Apelin from Rattus norvegicus (Rat).